We begin with the raw amino-acid sequence, 760 residues long: 5-methyltetrahydropteroyltriglutamate--homocysteine methyltransferase (760 aa).

5-methyltetrahydropteroyltri-L-glutamate-binding positions include 24-27 (RELK) and K118. Residues 437–439 (IGS) and E490 each bind L-homocysteine. L-methionine is bound by residues 437–439 (IGS) and E490. 5-methyltetrahydropteroyltri-L-glutamate contacts are provided by residues 521–522 (RC) and W567. D605 provides a ligand contact to L-homocysteine. D605 is a binding site for L-methionine. Position 611 (E611) interacts with 5-methyltetrahydropteroyltri-L-glutamate. Zn(2+) contacts are provided by H647, C649, and E671. H700 acts as the Proton donor in catalysis. Position 732 (C732) interacts with Zn(2+).

Belongs to the vitamin-B12 independent methionine synthase family. It depends on Zn(2+) as a cofactor.

It catalyses the reaction 5-methyltetrahydropteroyltri-L-glutamate + L-homocysteine = tetrahydropteroyltri-L-glutamate + L-methionine. Its pathway is amino-acid biosynthesis; L-methionine biosynthesis via de novo pathway; L-methionine from L-homocysteine (MetE route): step 1/1. Functionally, catalyzes the transfer of a methyl group from 5-methyltetrahydrofolate to homocysteine resulting in methionine formation. The sequence is that of 5-methyltetrahydropteroyltriglutamate--homocysteine methyltransferase from Mycobacterium leprae (strain TN).